The following is a 473-amino-acid chain: Rifampicin monooxygenase (473 aa).

FAD contacts are provided by Thr-12, Glu-31, Lys-32, and Arg-41. Arg-43 lines the rifampicin pocket. FAD is bound by residues Gln-98, Val-122, and Thr-156. Position 196 (Arg-196) interacts with rifampicin. FAD is bound at residue Asp-276. Gly-285 is a rifampicin binding site. FAD contacts are provided by Leu-289 and Asn-290.

It belongs to the rifampicin monooxygenase family. Homodimer. FAD serves as cofactor.

The catalysed reaction is rifampicin + NADPH + O2 = rifampicin para-naphthoquinone carboxamide + NADP(+) + H2O + H(+). The enzyme catalyses rifampicin + NADH + O2 = rifampicin para-naphthoquinone carboxamide + NAD(+) + H2O + H(+). Monooxygenase that can modify rifampicin, thereby inactivating its antibiotic activity. It constitutes a secondary rifampicin resistance factor. The sequence is that of Rifampicin monooxygenase from Nocardia farcinica (strain IFM 10152).